The sequence spans 614 residues: MSLLRCTTLLLVVVAIALPPCILGYSLHDGSRLDDFLTESAADRRPRRPTTAAQRRLMGLTEEQYKTVHFYLNKLKELGNQRHPEGYDKDTTKDEADKWRKRMRDDIEGELLNPEEYGRHFEGDIILFPEQAKQIYENALKTGQRRVKRKFIGSDLRRWDPTRPIVYSFDGSHTSREQRIIELALEHWHNITCLNFVRNDNANSGNRIVFTDVDGCASNVGRHPLGEEQLVSLAPECIRLGVIAHEVAHALGFWHEQSRPDRDQFVNVRWENIDKDSKGQFLKEDPDDVDNAGVPYDYGSIMHYRSKAFSRYDDLYTISTFVTDYQKTIGQRDQLSFNDIRLMNKIYCSNVCSRKLPCQRGGYTDPRRCDRCRCPDGFTGQFCEQVMPGYGAVCGGRIQVNGGWTKFSSPGYPREFKEGQECSWLLVAPHGQVVEMQFIGEFEMYCKVRHSLCMDYVEVRNSTDFANTGMRYCCYGTPSTSIRSATTDLVVLFRSFYRGGRGFEARARALPANGQWASWSPWTPCTASCGACGSRMRTRVCSHGACAGEPVENQVCNTHPCNGLCAHKKTEDGECGGFLALLRGVRCKQERTVMEPCENACCPGFSVVGGRCVR.

Positions 1 to 24 (MSLLRCTTLLLVVVAIALPPCILG) are cleaved as a signal peptide. A propeptide spanning residues 25 to 150 (YSLHDGSRLD…KTGQRRVKRK (126 aa)) is cleaved from the precursor. Positions 150-349 (KFIGSDLRRW…IRLMNKIYCS (200 aa)) constitute a Peptidase M12A domain. N-linked (GlcNAc...) asparagine glycosylation is present at N190. Cystine bridges form between C193–C348, C216–C237, C352–C372, C374–C383, and C394–C422. A Zn(2+)-binding site is contributed by H245. The active site involves E246. Residues H249 and H255 each coordinate Zn(2+). Residues 344–384 (NKIYCSNVCSRKLPCQRGGYTDPRRCDRCRCPDGFTGQFCE) enclose the EGF-like domain. In terms of domain architecture, CUB spans 394–510 (CGGRIQVNGG…RGFEARARAL (117 aa)). An N-linked (GlcNAc...) asparagine glycan is attached at N461. A TSP type-1 domain is found at 513–562 (NGQWASWSPWTPCTASCGACGSRMRTRVCSHGACAGEPVENQVCNTHPCN). Cystine bridges form between C525–C556, C529–C561, and C541–C546.

Zn(2+) is required as a cofactor.

The protein localises to the secreted. With respect to regulation, inhibited by marimastat and tripeptide hydroxamic acids. Inhibited by 1,10-phenanthroline. Metalloprotease which cleaves the carboxyl terminus of procollagens to mature collagens. Probably involved in cuticular collagen maturation. The sequence is that of Zinc metalloproteinase dpy-31 from Teladorsagia circumcincta (Brown stomach worm).